Reading from the N-terminus, the 318-residue chain is Bis(5'-nucleosyl)-tetraphosphatase, symmetrical (318 aa).

The tract at residues 269–318 is disordered; the sequence is PGREVTGPAPVARAPRRPRERQGRQRSRGNRGNAGNAAAGPKPSVDTPQD. Residues 282–297 are compositionally biased toward basic residues; sequence APRRPRERQGRQRSRG. Residues 298 to 311 show a composition bias toward low complexity; the sequence is NRGNAGNAAAGPKP.

This sequence belongs to the Ap4A hydrolase family.

It catalyses the reaction P(1),P(4)-bis(5'-adenosyl) tetraphosphate + H2O = 2 ADP + 2 H(+). In terms of biological role, hydrolyzes diadenosine 5',5'''-P1,P4-tetraphosphate to yield ADP. The polypeptide is Bis(5'-nucleosyl)-tetraphosphatase, symmetrical (Xanthomonas euvesicatoria pv. vesicatoria (strain 85-10) (Xanthomonas campestris pv. vesicatoria)).